Reading from the N-terminus, the 246-residue chain is UDP-N-acetyl-D-mannosaminuronic acid transferase (246 aa).

Belongs to the glycosyltransferase 26 family.

It carries out the reaction UDP-N-acetyl-alpha-D-mannosaminouronate + N-acetyl-alpha-D-glucosaminyl-di-trans,octa-cis-undecaprenyl diphosphate = beta-D-ManNAcA-(1-&gt;4)-alpha-D-GlcNAc-di-trans,octa-cis-undecaprenyl diphosphate + UDP + H(+). Its pathway is bacterial outer membrane biogenesis; enterobacterial common antigen biosynthesis. Its function is as follows. Catalyzes the synthesis of Und-PP-GlcNAc-ManNAcA (Lipid II), the second lipid-linked intermediate involved in enterobacterial common antigen (ECA) synthesis. The chain is UDP-N-acetyl-D-mannosaminuronic acid transferase from Escherichia coli O127:H6 (strain E2348/69 / EPEC).